The chain runs to 344 residues: Dihydroorotase (344 aa).

The Zn(2+) site is built by His14 and His16. Substrate is bound by residues 16 to 18 (HLR) and Asn42. Lys99, His136, and His174 together coordinate Zn(2+). Residue Lys99 is modified to N6-carboxylysine. Position 136 (His136) interacts with substrate. Leu219 provides a ligand contact to substrate. Asp247 contacts Zn(2+). The active site involves Asp247. Substrate-binding residues include His251 and Ala263.

It belongs to the metallo-dependent hydrolases superfamily. DHOase family. Class II DHOase subfamily. As to quaternary structure, homodimer. It depends on Zn(2+) as a cofactor.

It carries out the reaction (S)-dihydroorotate + H2O = N-carbamoyl-L-aspartate + H(+). Its pathway is pyrimidine metabolism; UMP biosynthesis via de novo pathway; (S)-dihydroorotate from bicarbonate: step 3/3. In terms of biological role, catalyzes the reversible cyclization of carbamoyl aspartate to dihydroorotate. This chain is Dihydroorotase, found in Teredinibacter turnerae (strain ATCC 39867 / T7901).